Reading from the N-terminus, the 900-residue chain is MQSSIPSVSVSVASPAMETPTKASPDSKSPNSVGAIPSSSPLASSTKASTSTPFVENCSNLLCDLASIVEDSPPTLTNTSLSPHSFSLSDMESSMSNWLNPFAFDNTMNSAPPLFTSTNMGSPNSLENSTNPLLSNCGSPNSFQNETFTGPSLNEFDADDKIQRQMKILHSVDTIDPSTVQNYPSADMSNPEVKLKTEEIITPMDTTCKPEPSAKKIKLSPSSEDSCSIPETLPFSAPKSRGSLSPSETPDFVAGPGGKPKKTAHNMIEKRYRTNLNDRICELRDAVPSLRAAAALRCGNSLDDEDLGGLTPARKLNKGTILAKATEYIRHLEAKNKELQKTNKQLSDRLAFYEDPSMAPPSNDTRAVNSVNVVSSSDYSVHQSSRPNLTQRAFTSPTLNTMGRTALNGMVGLGLFNYFGNDSSQSVYGLFALPPFLMSPFTGTVLFNMLKIGVVLLGLFYLLHDNSLFKGFKGEKKSKVSTRSSMSPSSILFRKTVFEKYCLLDHSTSTISLFFGLLIFTLKSAYGYLTHRLSALYTSSENWVYSEQQLAEVRNMEKLLDAQLMGGDAKVDRLRLLMVFASSFSLPPSSHTCALQAMYCQLIFSNTSVPSAIVSKCVAFFWNAAKKQHSKSSVHAELRELPECTANLIENSHADDVFSPNMVERLWVLAKCTRDSAQMSDSIISSLSDVLVLSPLEVLASWYAADLLDALLMESLSRKVEISEIEEIISLCPKNSSIIRHALLAKLVLFPENTADSLNEVLAAYKNTLDLCSQDKRKQSSVLKINLSKLFTLHSCLSLALQRLGYGDVSKRMYQEIFVPDSDADITPLSFIISWTALNTFAPICTSPKENDVVEKMAMYVRTAIGTLKIQDLKLSRKLINSCIDIGSRLQEDLGYVSSA.

Residues 1-16 (MQSSIPSVSVSVASPA) are compositionally biased toward low complexity. 2 disordered regions span residues 1-49 (MQSS…TKAS) and 206-263 (TTCK…PKKT). Residues 1-440 (MQSSIPSVSV…FALPPFLMSP (440 aa)) are nuclear form of sre1; complements deletions of sre1 or scp1. The Cytoplasmic portion of the chain corresponds to 1–442 (MQSSIPSVSV…LPPFLMSPFT (442 aa)). Positions 21 to 32 (TKASPDSKSPNS) are enriched in polar residues. Over residues 35 to 49 (AIPSSSPLASSTKAS) the composition is skewed to low complexity. The 73-residue stretch at 260–332 (PKKTAHNMIE…AKATEYIRHL (73 aa)) folds into the bHLH domain. A helical transmembrane segment spans residues 443–463 (GTVLFNMLKIGVVLLGLFYLL). Residues 464–509 (HDNSLFKGFKGEKKSKVSTRSSMSPSSILFRKTVFEKYCLLDHSTS) are Lumenal-facing. Residues 510–530 (TISLFFGLLIFTLKSAYGYLT) traverse the membrane as a helical segment. Topologically, residues 531–900 (HRLSALYTSS…QEDLGYVSSA (370 aa)) are cytoplasmic. Phosphoserine occurs at positions 898 and 899.

In terms of assembly, forms a tight complex with scp1, composed of 4 copies of scp1 and 4 copies of sre1, which protects sre1 precursor from degradation by the proteasome. In terms of processing, in low oxygen or sterol conditions, undergoes proteolytic cleavage by rhomboid-type protease rbd2 and is released as soluble transcription factor from the membrane. Post-translationally, processed form is phosphorylated.

The protein localises to the endoplasmic reticulum membrane. It is found in the nucleus. Functionally, precursor of the transcription factor form (Processed sterol regulatory element-binding protein 1), which is embedded in the endoplasmic reticulum membrane. Low oxygen or sterol conditions promote processing of this form, releasing the transcription factor form that translocates into the nucleus and activates transcription of genes required for adaptation to anaerobic growth. In terms of biological role, transcriptional activator required for transcription of genes required for adaptation to anaerobic growth like those implicated in the nonrespiratory oxygen-consumptive biosynthetic pathways of sterol, heme, sphingolipid, and ubiquinone biosynthesis. May monitor oxygen levels through sterol synthesis steps which require oxygen. In Schizosaccharomyces pombe (strain 972 / ATCC 24843) (Fission yeast), this protein is Sterol regulatory element-binding protein 1.